The chain runs to 107 residues: Iron-sulfur cluster assembly protein CyaY (107 aa).

This sequence belongs to the frataxin family.

Its function is as follows. Involved in iron-sulfur (Fe-S) cluster assembly. May act as a regulator of Fe-S biogenesis. This is Iron-sulfur cluster assembly protein CyaY from Neisseria meningitidis serogroup A / serotype 4A (strain DSM 15465 / Z2491).